We begin with the raw amino-acid sequence, 394 residues long: Elongation factor Tu (394 aa).

The region spanning 10–204 is the tr-type G domain; that stretch reads KPHVNVGTIG…ALDTYIPEPE (195 aa). A G1 region spans residues 19-26; it reads GHVDHGKT. Residue 19-26 coordinates GTP; the sequence is GHVDHGKT. Thr-26 is a binding site for Mg(2+). A G2 region spans residues 60-64; it reads GITIN. The tract at residues 81-84 is G3; sequence DCPG. GTP contacts are provided by residues 81-85 and 136-139; these read DCPGH and NKCD. The segment at 136–139 is G4; the sequence is NKCD. The G5 stretch occupies residues 174 to 176; the sequence is SAL.

This sequence belongs to the TRAFAC class translation factor GTPase superfamily. Classic translation factor GTPase family. EF-Tu/EF-1A subfamily. Monomer.

Its subcellular location is the cytoplasm. It catalyses the reaction GTP + H2O = GDP + phosphate + H(+). In terms of biological role, GTP hydrolase that promotes the GTP-dependent binding of aminoacyl-tRNA to the A-site of ribosomes during protein biosynthesis. In Vibrio cholerae serotype O1 (strain ATCC 39541 / Classical Ogawa 395 / O395), this protein is Elongation factor Tu.